Here is a 151-residue protein sequence, read N- to C-terminus: Probable cGMP 3',5'-cyclic phosphodiesterase subunit delta (151 aa).

This sequence belongs to the PDE6D/unc-119 family. As to quaternary structure, interacts with Pde6.

It is found in the nucleus. The protein resides in the cytoplasm. In Drosophila mojavensis (Fruit fly), this protein is Probable cGMP 3',5'-cyclic phosphodiesterase subunit delta.